The sequence spans 345 residues: IGF-like family receptor 1 (345 aa).

The N-terminal stretch at 1–20 is a signal peptide; it reads MGPSWLLWTVAVAVLLLTRA. At 21 to 163 the chain is on the extracellular side; it reads ASMEASSFCG…SSRPGFVSAS (143 aa). The N-linked (GlcNAc...) asparagine glycan is linked to asparagine 87. Residues 106–149 are disordered; that stretch reads VESPGRTHKQCRKKPVPPKDVCPLKPEDAGASSSPGRWSLGQTT. Positions 111 to 121 are enriched in basic residues; sequence RTHKQCRKKPV. Over residues 136–149 the composition is skewed to polar residues; the sequence is ASSSPGRWSLGQTT. A helical membrane pass occupies residues 164-184; that stretch reads VLPLAVLPLLLVLLLILAVVL. At 185-345 the chain is on the cytoplasmic side; that stretch reads LSLFKRKVRS…DALQVLSKLG (161 aa).

Ubiquitously expressed with higher expression in lymph node. Highly expressed in T-cells and monocytes.

Its subcellular location is the cell membrane. Probable cell membrane receptor for the IGF-like family protein IGFL. This Mus musculus (Mouse) protein is IGF-like family receptor 1 (Igflr1).